We begin with the raw amino-acid sequence, 101 residues long: ATP-dependent Clp protease adapter protein ClpS (101 aa).

Belongs to the ClpS family. In terms of assembly, binds to the N-terminal domain of the chaperone ClpA.

In terms of biological role, involved in the modulation of the specificity of the ClpAP-mediated ATP-dependent protein degradation. The protein is ATP-dependent Clp protease adapter protein ClpS of Treponema denticola (strain ATCC 35405 / DSM 14222 / CIP 103919 / JCM 8153 / KCTC 15104).